The chain runs to 149 residues: Nucleoside diphosphate kinase (149 aa).

ATP-binding residues include Lys9, Phe57, Arg85, Thr91, Arg102, and Asn112. Catalysis depends on His115, which acts as the Pros-phosphohistidine intermediate.

It belongs to the NDK family. As to quaternary structure, homotetramer. Requires Mg(2+) as cofactor.

Its subcellular location is the cytoplasm. It carries out the reaction a 2'-deoxyribonucleoside 5'-diphosphate + ATP = a 2'-deoxyribonucleoside 5'-triphosphate + ADP. The catalysed reaction is a ribonucleoside 5'-diphosphate + ATP = a ribonucleoside 5'-triphosphate + ADP. In terms of biological role, major role in the synthesis of nucleoside triphosphates other than ATP. The ATP gamma phosphate is transferred to the NDP beta phosphate via a ping-pong mechanism, using a phosphorylated active-site intermediate. The protein is Nucleoside diphosphate kinase of Pelotomaculum thermopropionicum (strain DSM 13744 / JCM 10971 / SI).